A 381-amino-acid chain; its full sequence is Creatine kinase B-type (381 aa).

Ser-4 carries the phosphoserine modification. The 88-residue stretch at 11–98 (KLRFPAEDEF…FDPIIEDRHG (88 aa)) folds into the Phosphagen kinase N-terminal domain. Position 35 is a phosphothreonine (Thr-35). Residue Lys-45 forms a Glycyl lysine isopeptide (Lys-Gly) (interchain with G-Cter in ubiquitin) linkage. Val-72 is a creatine binding site. Residues 96 to 110 (RHGGYKPSDEHKTDL) are compositionally biased toward basic and acidic residues. The disordered stretch occupies residues 96–123 (RHGGYKPSDEHKTDLNPDNLQGGDDLDP). Glycyl lysine isopeptide (Lys-Gly) (interchain with G-Cter in ubiquitin) cross-links involve residues Lys-101 and Lys-107. Tyr-125 is modified (phosphotyrosine). A Phosphagen kinase C-terminal domain is found at 125–367 (YVLSSRVRTG…KLLIEMEQRL (243 aa)). ATP contacts are provided by residues 128 to 132 (SSRVR), Arg-130, Arg-132, and His-191. The tract at residues 130–138 (RVRTGRSIR) is internal MTS-like signal. Position 199 is a phosphoserine (Ser-199). Glu-232 contacts creatine. An ATP-binding site is contributed by Arg-236. The residue at position 269 (Tyr-269) is a 3'-nitrotyrosine. Ser-285 contributes to the creatine binding site. Residues Arg-292, Arg-320, 320-325 (RGTGGV), and Asp-335 each bind ATP. Position 322 is a phosphothreonine (Thr-322). A Glycyl lysine isopeptide (Lys-Gly) (interchain with G-Cter in ubiquitin) cross-link involves residue Lys-381.

The protein belongs to the ATP:guanido phosphotransferase family. In terms of assembly, dimer of identical or non-identical chains, which can be either B (brain type) or M (muscle type). With MM being the major form in skeletal muscle and myocardium, MB existing in myocardium, and BB existing in many tissues, especially brain. Interacts with SLC12A6 (via C-terminus); the interaction may be required for SLC12A6 potassium-chloride cotransport activity. Ubiquitinated by the ECS(ASB9) complex, leading to its degradation by the proteasome.

The protein localises to the cytoplasm. The protein resides in the cytosol. Its subcellular location is the mitochondrion. It is found in the cell membrane. The enzyme catalyses creatine + ATP = N-phosphocreatine + ADP + H(+). Its function is as follows. Reversibly catalyzes the transfer of phosphate between ATP and various phosphogens (e.g. creatine phosphate). Creatine kinase isoenzymes play a central role in energy transduction in tissues with large, fluctuating energy demands, such as skeletal muscle, heart, brain and spermatozoa. Acts as a key regulator of adaptive thermogenesis as part of the futile creatine cycle: localizes to the mitochondria of thermogenic fat cells and acts by mediating phosphorylation of creatine to initiate a futile cycle of creatine phosphorylation and dephosphorylation. During the futile creatine cycle, creatine and N-phosphocreatine are in a futile cycle, which dissipates the high energy charge of N-phosphocreatine as heat without performing any mechanical or chemical work. This Canis lupus familiaris (Dog) protein is Creatine kinase B-type (CKB).